A 410-amino-acid polypeptide reads, in one-letter code: Metacaspase-1B (410 aa).

The disordered stretch occupies residues 1 to 106; sequence MYHRNSAPPP…SFGKGAPSNY (106 aa). Pro residues-rich tracts occupy residues 7–23 and 32–52; these read APPP…PQSQ and PPYP…PPPT. Catalysis depends on residues His-201 and Cys-257.

It belongs to the peptidase C14B family.

Functionally, involved in cell death (apoptosis). The polypeptide is Metacaspase-1B (casB) (Aspergillus clavatus (strain ATCC 1007 / CBS 513.65 / DSM 816 / NCTC 3887 / NRRL 1 / QM 1276 / 107)).